The primary structure comprises 360 residues: Peptide chain release factor 1 (360 aa).

Glutamine 237 is modified (N5-methylglutamine).

This sequence belongs to the prokaryotic/mitochondrial release factor family. Methylated by PrmC. Methylation increases the termination efficiency of RF1.

It localises to the cytoplasm. Functionally, peptide chain release factor 1 directs the termination of translation in response to the peptide chain termination codons UAG and UAA. This chain is Peptide chain release factor 1, found in Cellvibrio japonicus (strain Ueda107) (Pseudomonas fluorescens subsp. cellulosa).